A 65-amino-acid chain; its full sequence is Large ribosomal subunit protein bL35 (65 aa).

A compositionally biased stretch (basic residues) spans methionine 1–serine 15. Residues methionine 1–serine 21 are disordered.

Belongs to the bacterial ribosomal protein bL35 family.

This chain is Large ribosomal subunit protein bL35, found in Dechloromonas aromatica (strain RCB).